Here is a 479-residue protein sequence, read N- to C-terminus: Beta-monoglucosyldiacylglycerol synthase (479 aa).

Transmembrane regions (helical) follow at residues 48–68, 363–383, 389–409, and 428–448; these read AAVMLMAIWTVVITLHYWVWG, FLLMQYLLPTAAVPDLLMALW, LLTPLSYLAIGFSCWGMYYGL, and LARTIGGTIYMFHWLIIMPAV.

This sequence belongs to the glycosyltransferase 2 family. Requires Mg(2+) as cofactor.

The protein resides in the membrane. The enzyme catalyses a 1,2-diacyl-sn-glycerol + UDP-alpha-D-glucose = a 1,2-diacyl-3-O-(beta-D-glucopyranosyl)-sn-glycerol + UDP + H(+). In terms of biological role, glucosyltransferase involved in the biosynthesis of the non-bilayer-forming membrane lipid beta-monoglucosyldiacylglycerol which contributes to regulate the properties and stability of the membrane. Catalyzes the transfer of a glucosyl residue from UDP-Glc to diacylglycerol (DAG) acceptor to form the corresponding beta-glucosyl-DAG (1,2-diacyl-3-O-(beta-D-glucopyranosyl)-sn-glycerol). It can only use UDP-Glc as sugar donor. Two types of DAG (dipalmitoyl-DAG (DPDAG) and 1-oleoyl-2-palmitoyl-DAG (OPDAG)) can be used as sugar acceptors, but OPDAG is preferred. This chain is Beta-monoglucosyldiacylglycerol synthase, found in Synechocystis sp. (strain ATCC 27184 / PCC 6803 / Kazusa).